The primary structure comprises 294 residues: Ribosomal protein L11 methyltransferase (294 aa).

Positions 146, 167, 189, and 231 each coordinate S-adenosyl-L-methionine.

This sequence belongs to the methyltransferase superfamily. PrmA family.

It is found in the cytoplasm. The enzyme catalyses L-lysyl-[protein] + 3 S-adenosyl-L-methionine = N(6),N(6),N(6)-trimethyl-L-lysyl-[protein] + 3 S-adenosyl-L-homocysteine + 3 H(+). Functionally, methylates ribosomal protein L11. The polypeptide is Ribosomal protein L11 methyltransferase (Photobacterium profundum (strain SS9)).